We begin with the raw amino-acid sequence, 623 residues long: Ciliated left-right organizer metallopeptidase (623 aa).

Residues 1-20 form the signal peptide; it reads MSFLLCIGILLLPWFPCVCG. The Extracellular segment spans residues 21-578; that stretch reads KCIFDQIQRS…LFLVSEAKIS (558 aa). H249 lines the Zn(2+) pocket. E250 is a catalytic residue. 2 residues coordinate Zn(2+): H253 and H326. Residues 579–599 form a helical membrane-spanning segment; that stretch reads LAAVLSLMAVFALLSAAVLLY. Residues 600 to 623 are Cytoplasmic-facing; sequence RKNLSVRVHAASYRTPLPHILYRN.

Belongs to the peptidase M8 family. Requires Zn(2+) as cofactor. Expressed specifically in dorsal forerunner cells (DFCs) that form a ciliated Kupffer's vesicle later.

It localises to the membrane. Plays an essential role for patterning the left-right axis. Requires solely on the left side, downstream of the leftward flow, but upstream of dand5, a nodal inhibitor involved in left-right patterning. In Danio rerio (Zebrafish), this protein is Ciliated left-right organizer metallopeptidase (cirop).